The chain runs to 668 residues: MDLRQREHIETVVQATTYLAPPAVLADRIAHDAIIQNSWRRCVHQYGLDPSRMQEARILPQPRLREHQERIDDFARIARHGLQSLYGQVAGLGYVVLLTDAQGVTVDYIGEARSDAALRHAGLYLGAEWSESGAGTCAVGTALATGQALTVHQADHFDATHIPLTCTAAPLFDTHGNLHAILDISALTSPQAKDSQGLALQMVRIYAAHIENANFLRAHRRDWILKLNVAPEFVDVNPEYLLALDEAGRIVGHNHRARLMLEGELGGAPGATVLGQRFETLFDARLEDLGHYVYSRPSEQRLVALTRSGGLLYLSVLPPALRWQAPPAETQVAMPDALAALTGGDAALQLQLQRAARLVDSPINLLIHGETGSGKEFLAKALHLASARRGGPFVAVNCAAIPETLIESELFGHLPNSFSGAGPRGKRGLIQEADGGTLFLDEIGDMPRELQSRLLRVLAEGEVLPVGAARPVPVRLRVISATHHSLEQLVADGRFREDLYYRLNGARFTLPPLRARTDLDWLVRKLLQEGSAEGSEITLSPAARERLHRHRWPGNLRELRNVLEYARAVCADGYIDVPDLPDSLAGPAPSAALPQPGPAQSPAAAPFDPHQLPPEGMLLMQYLRASGWNLSAVARQIGVSRMTLYRRMERYGIQSPNRRDGGPEPTDA.

One can recognise a Sigma-54 factor interaction domain in the interval 341–570 (LTGGDAALQL…NVLEYARAVC (230 aa)). ATP contacts are provided by residues 369–376 (GETGSGKE) and 433–442 (ADGGTLFLDE). Residues 586-606 (GPAPSAALPQPGPAQSPAAAP) are compositionally biased toward low complexity. The segment at 586–611 (GPAPSAALPQPGPAQSPAAAPFDPHQ) is disordered. Residues 630 to 649 (LSAVARQIGVSRMTLYRRME) constitute a DNA-binding region (H-T-H motif).

Required for sigma-54-dependent transcription of acoXABC. This Cupriavidus necator (strain ATCC 17699 / DSM 428 / KCTC 22496 / NCIMB 10442 / H16 / Stanier 337) (Ralstonia eutropha) protein is Acetoin catabolism regulatory protein (acoR).